The following is a 384-amino-acid chain: MAP kinase-activated protein kinase 3 (384 aa).

M1 is modified (N-acetylmethionine). The disordered stretch occupies residues 1–33 (MDGETAGEKGSLVPQPGALGAPALGGAPAPGVR). The segment covering 14–31 (PQPGALGAPALGGAPAPG) has biased composition (low complexity). Residues 46-306 (QLSKQVLGLG…IMQFMNHPWI (261 aa)) enclose the Protein kinase domain. ATP contacts are provided by residues 52–60 (LGLGVNGKV) and K75. D168 functions as the Proton acceptor in the catalytic mechanism. T203 carries the post-translational modification Phosphothreonine; by MAPK14. Phosphoserine; by MAPK14 is present on S253. Residue S309 is modified to Phosphoserine; by autocatalysis. The interval 309–345 (SMEVPQTPLHTARVLEEDKDHWDDVKEEMTSALATMR) is autoinhibitory helix. T315 is modified (phosphothreonine; by MAPK14). A Nuclear export signal (NES) motif is present at residues 337-346 (MTSALATMRV). Residues 347 to 371 (DYDQVKIKDLKTSNNRLLNKRRKKQ) are p38 MAPK-binding site. 2 consecutive short sequence motifs (bipartite nuclear localization signal) follow at residues 352-355 (KIKD) and 366-370 (KRRKK). The tract at residues 359–384 (SNNRLLNKRRKKQGGSSSASPGCNNQ) is disordered. The span at 372-384 (GGSSSASPGCNNQ) shows a compositional bias: polar residues.

This sequence belongs to the protein kinase superfamily. CAMK Ser/Thr protein kinase family. In terms of assembly, heterodimer with p38-alpha/MAPK14. The heterodimer with p38-alpha/MAPK14 forms a stable complex: molecules are positioned 'face to face' so that the ATP-binding sites of both kinases are at the heterodimer interface. Interacts with TCF3 and with polycomb proteins, such as PCH2 and BMI1/PCGF4. Post-translationally, phosphorylated and activated by MAPK1/ERK2 and MAPK3/ERK1. Phosphorylated and activated by MAP kinase p38-alpha/MAPK14 at Thr-203, Ser-253 and Thr-315.

The protein resides in the nucleus. It is found in the cytoplasm. It carries out the reaction L-seryl-[protein] + ATP = O-phospho-L-seryl-[protein] + ADP + H(+). The enzyme catalyses L-threonyl-[protein] + ATP = O-phospho-L-threonyl-[protein] + ADP + H(+). With respect to regulation, activated following phosphorylation by p38-alpha/MAPK14 following various stresses. Inhibited by ligand 5B (2'-[2-(1,3-benzodioxol-5-yl)pyrimidin-4-yl]-5',6'-dihydrospiro[piperidine-4,7'-pyrrolo[3,2-c]pyridin]- 4'(1'h)-one) and ligand P4O (2-[2-(2-fluorophenyl)pyridin-4-yl]-1,5,6,7-tetrahydro- 4h-pyrrolo[3,2-c]pyridin-4-one), 2 ATP-competitive inhibitors. In terms of biological role, stress-activated serine/threonine-protein kinase involved in cytokines production, endocytosis, cell migration, chromatin remodeling and transcriptional regulation. Following stress, it is phosphorylated and activated by MAP kinase p38-alpha/MAPK14, leading to phosphorylation of substrates. Phosphorylates serine in the peptide sequence, Hyd-X-R-X(2)-S, where Hyd is a large hydrophobic residue. MAPKAPK2 and MAPKAPK3, share the same function and substrate specificity, but MAPKAPK3 kinase activity and level in protein expression are lower compared to MAPKAPK2. Phosphorylates HSP27/HSPB1, KRT18, KRT20, RCSD1, RPS6KA3, TAB3 and TTP/ZFP36. Mediates phosphorylation of HSP27/HSPB1 in response to stress, leading to dissociate HSP27/HSPB1 from large small heat-shock protein (sHsps) oligomers and impair their chaperone activities and ability to protect against oxidative stress effectively. Involved in inflammatory response by regulating tumor necrosis factor (TNF) and IL6 production post-transcriptionally: acts by phosphorylating AU-rich elements (AREs)-binding proteins, such as TTP/ZFP36, leading to regulate the stability and translation of TNF and IL6 mRNAs. Phosphorylation of TTP/ZFP36, a major post-transcriptional regulator of TNF, promotes its binding to 14-3-3 proteins and reduces its ARE mRNA affinity leading to inhibition of dependent degradation of ARE-containing transcript. Involved in toll-like receptor signaling pathway (TLR) in dendritic cells: required for acute TLR-induced macropinocytosis by phosphorylating and activating RPS6KA3. Also acts as a modulator of Polycomb-mediated repression. The polypeptide is MAP kinase-activated protein kinase 3 (Mapkapk3) (Rattus norvegicus (Rat)).